Consider the following 224-residue polypeptide: RNA-free ribonuclease P (224 aa).

It belongs to the HARP family.

It carries out the reaction Endonucleolytic cleavage of RNA, removing 5'-extranucleotides from tRNA precursor.. RNA-free RNase P that catalyzes the removal of the 5'-leader sequence from pre-tRNA to produce the mature 5'-terminus. This is RNA-free ribonuclease P from Haloarcula marismortui (strain ATCC 43049 / DSM 3752 / JCM 8966 / VKM B-1809) (Halobacterium marismortui).